A 352-amino-acid chain; its full sequence is Biotin synthase (352 aa).

The Radical SAM core domain maps to 44–262; that stretch reads NRVQVSTLLS…LAVARIMMPK (219 aa). 3 residues coordinate [4Fe-4S] cluster: Cys59, Cys63, and Cys66. Cys103, Cys134, Cys194, and Arg266 together coordinate [2Fe-2S] cluster.

Belongs to the radical SAM superfamily. Biotin synthase family. As to quaternary structure, homodimer. The cofactor is [4Fe-4S] cluster. It depends on [2Fe-2S] cluster as a cofactor.

The enzyme catalyses (4R,5S)-dethiobiotin + (sulfur carrier)-SH + 2 reduced [2Fe-2S]-[ferredoxin] + 2 S-adenosyl-L-methionine = (sulfur carrier)-H + biotin + 2 5'-deoxyadenosine + 2 L-methionine + 2 oxidized [2Fe-2S]-[ferredoxin]. It functions in the pathway cofactor biosynthesis; biotin biosynthesis; biotin from 7,8-diaminononanoate: step 2/2. Functionally, catalyzes the conversion of dethiobiotin (DTB) to biotin by the insertion of a sulfur atom into dethiobiotin via a radical-based mechanism. The chain is Biotin synthase from Pseudomonas aeruginosa (strain LESB58).